The primary structure comprises 305 residues: UDP-3-O-acyl-N-acetylglucosamine deacetylase (305 aa).

H78, H235, and D239 together coordinate Zn(2+). Catalysis depends on H262, which acts as the Proton donor.

Belongs to the LpxC family. The cofactor is Zn(2+).

It carries out the reaction a UDP-3-O-[(3R)-3-hydroxyacyl]-N-acetyl-alpha-D-glucosamine + H2O = a UDP-3-O-[(3R)-3-hydroxyacyl]-alpha-D-glucosamine + acetate. It functions in the pathway glycolipid biosynthesis; lipid IV(A) biosynthesis; lipid IV(A) from (3R)-3-hydroxytetradecanoyl-[acyl-carrier-protein] and UDP-N-acetyl-alpha-D-glucosamine: step 2/6. Its function is as follows. Catalyzes the hydrolysis of UDP-3-O-myristoyl-N-acetylglucosamine to form UDP-3-O-myristoylglucosamine and acetate, the committed step in lipid A biosynthesis. This is UDP-3-O-acyl-N-acetylglucosamine deacetylase from Geobacter sp. (strain M21).